Consider the following 141-residue polypeptide: Nucleoside diphosphate kinase (141 aa).

The ATP site is built by Lys11, Phe59, Arg87, Thr93, Arg104, and Asn114. His117 serves as the catalytic Pros-phosphohistidine intermediate.

It belongs to the NDK family. Homotetramer. The cofactor is Mg(2+).

It localises to the cytoplasm. The enzyme catalyses a 2'-deoxyribonucleoside 5'-diphosphate + ATP = a 2'-deoxyribonucleoside 5'-triphosphate + ADP. The catalysed reaction is a ribonucleoside 5'-diphosphate + ATP = a ribonucleoside 5'-triphosphate + ADP. Its function is as follows. Major role in the synthesis of nucleoside triphosphates other than ATP. The ATP gamma phosphate is transferred to the NDP beta phosphate via a ping-pong mechanism, using a phosphorylated active-site intermediate. This chain is Nucleoside diphosphate kinase, found in Laribacter hongkongensis (strain HLHK9).